A 93-amino-acid chain; its full sequence is Phosphoribosyl-ATP pyrophosphatase (93 aa).

The protein belongs to the PRA-PH family.

The protein resides in the cytoplasm. It carries out the reaction 1-(5-phospho-beta-D-ribosyl)-ATP + H2O = 1-(5-phospho-beta-D-ribosyl)-5'-AMP + diphosphate + H(+). Its pathway is amino-acid biosynthesis; L-histidine biosynthesis; L-histidine from 5-phospho-alpha-D-ribose 1-diphosphate: step 2/9. In Mycobacterium avium (strain 104), this protein is Phosphoribosyl-ATP pyrophosphatase.